A 78-amino-acid polypeptide reads, in one-letter code: Omega-conotoxin-like VnMKLT1-0111 (78 aa).

The signal sequence occupies residues 1–22 (MKLTCMMIVAVLFLTAWTFVTA). A propeptide spanning residues 23–48 (DSRNGLEYLFPKAHYEMNPEASKLNK) is cleaved from the precursor. 3 cysteine pairs are disulfide-bonded: Cys52-Cys69, Cys59-Cys73, and Cys68-Cys77.

This sequence belongs to the conotoxin O1 superfamily. Expressed by the venom duct.

The protein localises to the secreted. Its function is as follows. Omega-conotoxins act at presynaptic membranes, they bind and block voltage-gated calcium channels (Cav). In Conus ventricosus (Mediterranean cone), this protein is Omega-conotoxin-like VnMKLT1-0111.